Consider the following 248-residue polypeptide: 1-(5-phosphoribosyl)-5-[(5-phosphoribosylamino)methylideneamino] imidazole-4-carboxamide isomerase (248 aa).

The active-site Proton acceptor is the D8. Residue D129 is the Proton donor of the active site.

The protein belongs to the HisA/HisF family.

It localises to the cytoplasm. The enzyme catalyses 1-(5-phospho-beta-D-ribosyl)-5-[(5-phospho-beta-D-ribosylamino)methylideneamino]imidazole-4-carboxamide = 5-[(5-phospho-1-deoxy-D-ribulos-1-ylimino)methylamino]-1-(5-phospho-beta-D-ribosyl)imidazole-4-carboxamide. The protein operates within amino-acid biosynthesis; L-histidine biosynthesis; L-histidine from 5-phospho-alpha-D-ribose 1-diphosphate: step 4/9. This chain is 1-(5-phosphoribosyl)-5-[(5-phosphoribosylamino)methylideneamino] imidazole-4-carboxamide isomerase, found in Rhizobium leguminosarum bv. trifolii (strain WSM2304).